Here is a 524-residue protein sequence, read N- to C-terminus: Excitatory amino acid transporter 3 (524 aa).

The Cytoplasmic portion of the chain corresponds to 1–18 (MGKPARKGCDSKRFLKNN). The chain crosses the membrane as a helical span at residues 19-38 (WLLLSTVVAVVLGIVIGVLV). Over 39 to 61 (REYSNLSTLDKFYFAFPGEILMR) the chain is Extracellular. The N-linked (GlcNAc...) asparagine glycan is linked to asparagine 43. The chain crosses the membrane as a helical span at residues 62-82 (MLKLVILPLIVSSMITGVAAL). The Cytoplasmic segment spans residues 83-93 (DSNVSGKIGLR). A helical membrane pass occupies residues 94–114 (AVLYYFCTTIIAVILGIVLVV). Na(+) is bound by residues tyrosine 98, threonine 101, and threonine 102. Residues 115 to 205 (SIKPGVTQKV…RTKEYRVVGL (91 aa)) lie on the Extracellular side of the membrane. Asparagine 178 and asparagine 195 each carry an N-linked (GlcNAc...) asparagine glycan. Residues 206-229 (YSDGINVLGLIVFCLVFGLVIGKM) form a helical membrane-spanning segment. Over 230 to 238 (GEKGQILVD) the chain is Cytoplasmic. Residues 239 to 266 (FFNALSDATMKIVQIIMCYMPLGILFLI) form a helical membrane-spanning segment. The Extracellular segment spans residues 267–286 (AGKIIEVEDWEIFRKLGLYM). Residues 287 to 308 (VTVLSGLAIHSIVILPLIYFIV) form a helical membrane-spanning segment. The Cytoplasmic segment spans residues 309 to 313 (VRKNP). An intramembrane region (discontinuously helical) is located at residues 314 to 344 (FRFAMGMTQALLTALMISSSSATLPVTFRCA). 2 residues coordinate L-aspartate: serine 331 and serine 333. Topologically, residues 345–353 (EEKNRVDKR) are cytoplasmic. Residues 354-380 (ITRFVLPVGATINMDGTALYEAVAAVF) form a helical membrane-spanning segment. Residues glycine 362, threonine 364, asparagine 366, and aspartate 368 each coordinate Na(+). Threonine 370 contacts L-aspartate. Residues 381 to 393 (IAQLNDMDLSIGQ) are Extracellular-facing. The segment at residues 394 to 427 (IITISVTATAASIGAAGVPQAGLVTMVIVLSAVG) is an intramembrane region (discontinuously helical). Serine 405, isoleucine 406, and alanine 408 together coordinate Na(+). Residue valine 411 participates in L-aspartate binding. Residues 428–440 (LPAEDVTLIIAVD) lie on the Extracellular side of the membrane. Residues 441–462 (WLLDRFRTVVNVLGDAFGTGIV) form a helical membrane-spanning segment. Residues arginine 447, threonine 448, and asparagine 451 each contribute to the L-aspartate site. Na(+) is bound by residues asparagine 451 and aspartate 455. Residues 463–524 (EKLSKKELEQ…TISFTQTSQF (62 aa)) lie on the Cytoplasmic side of the membrane. Phosphoserine occurs at positions 517 and 522.

It belongs to the dicarboxylate/amino acid:cation symporter (DAACS) (TC 2.A.23) family. SLC1A1 subfamily. Homotrimer. Interacts with ARL6IP5. Interacts with RTN2 (via N-terminus); the interaction promotes cell surface expression of SLC1A1. Interacts with SORCS2; this interaction is important for normal expression at the cell membrane. Brain, but also small intestine, kidney, liver and heart.

The protein resides in the cell membrane. It localises to the apical cell membrane. The protein localises to the synapse. It is found in the synaptosome. Its subcellular location is the early endosome membrane. The protein resides in the late endosome membrane. It localises to the recycling endosome membrane. The enzyme catalyses K(+)(in) + L-glutamate(out) + 3 Na(+)(out) + H(+)(out) = K(+)(out) + L-glutamate(in) + 3 Na(+)(in) + H(+)(in). It carries out the reaction K(+)(in) + L-aspartate(out) + 3 Na(+)(out) + H(+)(out) = K(+)(out) + L-aspartate(in) + 3 Na(+)(in) + H(+)(in). The catalysed reaction is D-aspartate(out) + K(+)(in) + 3 Na(+)(out) + H(+)(out) = D-aspartate(in) + K(+)(out) + 3 Na(+)(in) + H(+)(in). It catalyses the reaction K(+)(in) + L-cysteine(out) + 3 Na(+)(out) + H(+)(out) = K(+)(out) + L-cysteine(in) + 3 Na(+)(in) + H(+)(in). Its function is as follows. Sodium-dependent, high-affinity amino acid transporter that mediates the uptake of L-glutamate and also L-aspartate and D-aspartate. Can also transport L-cysteine. Functions as a symporter that transports one amino acid molecule together with two or three Na(+) ions and one proton, in parallel with the counter-transport of one K(+) ion. Mediates Cl(-) flux that is not coupled to amino acid transport; this avoids the accumulation of negative charges due to aspartate and Na(+) symport. Plays an important role in L-glutamate and L-aspartate reabsorption in renal tubuli. Plays a redundant role in the rapid removal of released glutamate from the synaptic cleft, which is essential for terminating the postsynaptic action of glutamate. Contributes to glutathione biosynthesis and protection against oxidative stress via its role in L-glutamate and L-cysteine transport. Negatively regulated by ARL6IP5. The sequence is that of Excitatory amino acid transporter 3 (SLC1A1) from Oryctolagus cuniculus (Rabbit).